The chain runs to 226 residues: Cytidylate kinase (226 aa).

ATP is bound at residue 11-19; sequence GPASAGKST.

The protein belongs to the cytidylate kinase family. Type 1 subfamily.

The protein localises to the cytoplasm. It carries out the reaction CMP + ATP = CDP + ADP. The catalysed reaction is dCMP + ATP = dCDP + ADP. The sequence is that of Cytidylate kinase from Pediococcus pentosaceus (strain ATCC 25745 / CCUG 21536 / LMG 10740 / 183-1w).